Here is a 198-residue protein sequence, read N- to C-terminus: Suppressor of cytokine signaling 2 (198 aa).

The disordered stretch occupies residues 1 to 29 (MTLRCLEPSGNGADRTRSQWGTAGLPEEQ). An interaction with AREL1 region spans residues 1–75 (MTLRCLEPSG…PEGTFLIRDS (75 aa)). Position 30 is a phosphoserine (Ser-30). The 109-residue stretch at 48-156 (WYWGSMTVNE…TVHLYLTKPL (109 aa)) folds into the SH2 domain. The residue at position 52 (Ser-52) is a Phosphoserine; by PKC. One can recognise an SOCS box domain in the interval 151 to 197 (YLTKPLYTSAPTLQHFCRLAINKCTGTIWGLPLPTRLKDYLEEYKFQ). Lys-173 is covalently cross-linked (Glycyl lysine isopeptide (Lys-Gly) (interchain with G-Cter in ubiquitin)).

In terms of assembly, substrate-recognition component of the ECS(SOCS2) complex, composed of SOCS2, CUL5, ELOB, ELOC and RNF7/RBX2. Interacts with IGF1R. Interacts with DCUN1D1. In terms of processing, ubiquitinated; mediated by AREL1 and leading to its subsequent proteasomal degradation. Ubiquitination is dependent on phosphorylation at Ser-52, by PKC and is stimulated by LPS. Phosphorylation at Ser-52 by PKC facilitates its ubiquitination and proteasomal degradation. As to expression, expressed primarily in the testis, some expression in liver and lung.

It localises to the cytoplasm. It participates in protein modification; protein ubiquitination. In terms of biological role, substrate-recognition component of a cullin-5-RING E3 ubiquitin-protein ligase complex (ECS complex, also named CRL5 complex), which mediates the ubiquitination and subsequent proteasomal degradation of target proteins, such as EPOR and GHR. Specifically recognizes and binds phosphorylated proteins via its SH2 domain, promoting their ubiquitination. The ECS(SOCS2) complex acts as a key regulator of growth hormone receptor (GHR) levels by mediating ubiquitination and degradation of GHR, following GHR phosphorylation by JAK2. The ECS(SOCS2) also catalyzes ubiquitination and degradation of JAK2-phosphorylated EPOR. This chain is Suppressor of cytokine signaling 2, found in Mus musculus (Mouse).